Consider the following 261-residue polypeptide: Undecaprenyl-diphosphatase (261 aa).

Transmembrane regions (helical) follow at residues 38–58 (RSDF…TFVF), 75–95 (RDYV…GLAV), 106–126 (IQPI…AESV), 136–156 (VTWS…VFPG), 181–201 (FSFL…CFEL), 217–237 (VAFV…LGYI), and 241–261 (SFAP…TWLT).

It belongs to the UppP family.

It localises to the cell inner membrane. It catalyses the reaction di-trans,octa-cis-undecaprenyl diphosphate + H2O = di-trans,octa-cis-undecaprenyl phosphate + phosphate + H(+). Catalyzes the dephosphorylation of undecaprenyl diphosphate (UPP). Confers resistance to bacitracin. The polypeptide is Undecaprenyl-diphosphatase (Xylella fastidiosa (strain 9a5c)).